The following is a 768-amino-acid chain: Probable beta-glucosidase M (768 aa).

Positions 1 to 19 (MHAIAGLTGLLAGVSLSYA) are cleaved as a signal peptide. Asparagine 25, asparagine 72, and asparagine 259 each carry an N-linked (GlcNAc...) asparagine glycan. Residue aspartate 287 is part of the active site. N-linked (GlcNAc...) asparagine glycosylation is found at asparagine 315, asparagine 322, asparagine 394, asparagine 434, asparagine 472, asparagine 543, and asparagine 651.

It belongs to the glycosyl hydrolase 3 family.

It is found in the secreted. It carries out the reaction Hydrolysis of terminal, non-reducing beta-D-glucosyl residues with release of beta-D-glucose.. It participates in glycan metabolism; cellulose degradation. Its function is as follows. Beta-glucosidases are one of a number of cellulolytic enzymes involved in the degradation of cellulosic biomass. Catalyzes the last step releasing glucose from the inhibitory cellobiose. The polypeptide is Probable beta-glucosidase M (bglM) (Aspergillus oryzae (strain ATCC 42149 / RIB 40) (Yellow koji mold)).